Consider the following 70-residue polypeptide: DNA-directed RNA polymerase subunit epsilon (70 aa).

The protein belongs to the RNA polymerase subunit epsilon family. RNAP is composed of a core of 2 alpha, a beta and a beta' subunit. The core is associated with a delta subunit, and at least one of epsilon or omega. When a sigma factor is associated with the core the holoenzyme is formed, which can initiate transcription.

The enzyme catalyses RNA(n) + a ribonucleoside 5'-triphosphate = RNA(n+1) + diphosphate. A non-essential component of RNA polymerase (RNAP). This chain is DNA-directed RNA polymerase subunit epsilon, found in Bacillus cereus (strain ATCC 14579 / DSM 31 / CCUG 7414 / JCM 2152 / NBRC 15305 / NCIMB 9373 / NCTC 2599 / NRRL B-3711).